Reading from the N-terminus, the 802-residue chain is Leucine--tRNA ligase (802 aa).

The short motif at 40 to 51 (PYPSGAGLHVGH) is the 'HIGH' region element. The short motif at 576 to 580 (KMSKS) is the 'KMSKS' region element. ATP is bound at residue Lys579.

It belongs to the class-I aminoacyl-tRNA synthetase family.

The protein localises to the cytoplasm. It carries out the reaction tRNA(Leu) + L-leucine + ATP = L-leucyl-tRNA(Leu) + AMP + diphosphate. The protein is Leucine--tRNA ligase of Bacillus thuringiensis subsp. konkukian (strain 97-27).